A 393-amino-acid chain; its full sequence is NAD(P)H-quinone oxidoreductase subunit H, chloroplastic (393 aa).

It belongs to the complex I 49 kDa subunit family. NDH is composed of at least 16 different subunits, 5 of which are encoded in the nucleus.

It localises to the plastid. The protein localises to the chloroplast thylakoid membrane. The enzyme catalyses a plastoquinone + NADH + (n+1) H(+)(in) = a plastoquinol + NAD(+) + n H(+)(out). It catalyses the reaction a plastoquinone + NADPH + (n+1) H(+)(in) = a plastoquinol + NADP(+) + n H(+)(out). Its function is as follows. NDH shuttles electrons from NAD(P)H:plastoquinone, via FMN and iron-sulfur (Fe-S) centers, to quinones in the photosynthetic chain and possibly in a chloroplast respiratory chain. The immediate electron acceptor for the enzyme in this species is believed to be plastoquinone. Couples the redox reaction to proton translocation, and thus conserves the redox energy in a proton gradient. The sequence is that of NAD(P)H-quinone oxidoreductase subunit H, chloroplastic from Solanum bulbocastanum (Wild potato).